The primary structure comprises 204 residues: Ribosome maturation factor RimP (204 aa).

The protein belongs to the RimP family.

Its subcellular location is the cytoplasm. Required for maturation of 30S ribosomal subunits. In Allorhizobium ampelinum (strain ATCC BAA-846 / DSM 112012 / S4) (Agrobacterium vitis (strain S4)), this protein is Ribosome maturation factor RimP.